A 440-amino-acid polypeptide reads, in one-letter code: Oligodendrocyte-myelin glycoprotein (440 aa).

Residues 1-24 form the signal peptide; sequence MEYQILKMSSCLFILLFLTPGILC. The LRRNT domain occupies 25–55; sequence ICPLQCTCTERHRHVDCSGRNLTTLPPGLQE. 2 N-linked (GlcNAc...) asparagine glycosylation sites follow: Asn-45 and Asn-61. LRR repeat units lie at residues 56 to 78, 79 to 100, 101 to 121, 124 to 145, 147 to 168, 169 to 189, 192 to 213, and 216 to 239; these read NIIH…TPYT, NLRT…LPRS, LWNM…DTAY, NLKY…KNTL, SLEV…MPSK, LHIV…TLIN, NLTH…SFDQ, and QLQE…TYLL. Residue Asn-103 is glycosylated (N-linked (GlcNAc...) asparagine). N-linked (GlcNAc...) asparagine glycosylation is found at Asn-152, Asn-176, Asn-189, Asn-192, and Asn-234. 5 Ser/Thr-rich repeats span residues 229-270, 271-292, 293-335, 336-377, and 378-416; these read CDHK…YPTP, PGFT…INSL, SMVT…VAYP, EDTP…PPSP, and VTLS…TRPP. Residues Asn-364 and Asn-389 are each glycosylated (N-linked (GlcNAc...) asparagine). Residue Ser-417 is the site of GPI-anchor amidated serine attachment. Residues 418–440 constitute a propeptide, removed in mature form; that stretch reads AASAWKVNASLLLMLNAVVMLAG. A glycan (N-linked (GlcNAc...) asparagine) is linked at Asn-425.

In terms of assembly, binds to RTN4R. In terms of processing, O-glycosylated in its Ser/Thr-rich repeat domain. As to expression, oligodendrocytes and myelin of the central nervous system.

The protein resides in the cell membrane. In terms of biological role, cell adhesion molecule contributing to the interactive process required for myelination in the central nervous system. In Mus musculus (Mouse), this protein is Oligodendrocyte-myelin glycoprotein (Omg).